A 228-amino-acid chain; its full sequence is Delta-type opioid receptor (228 aa).

Residues 1–3 (GIV) form a helical membrane-spanning segment. At 4–13 (RYTKMKTATN) the chain is on the cytoplasmic side. A helical membrane pass occupies residues 14-38 (IYIFNLALADALATSTLPFQSAKYL). The Extracellular portion of the chain corresponds to 39–50 (METWPFGELLCK). Cys-49 and Cys-126 are oxidised to a cystine. The helical transmembrane segment at 51 to 72 (AVLSIDYYNMFTSIFTLTMMSV) threads the bilayer. At 73 to 91 (DRYIAVCHPVKALDFRTPA) the chain is on the cytoplasmic side. Residues 92–114 (KAKLINICIWVLASGVGVPIMVM) traverse the membrane as a helical segment. The Extracellular portion of the chain corresponds to 115–134 (AVTRPRDGAVVCMLQFPSPS). The chain crosses the membrane as a helical span at residues 135–166 (WYWDTVTKICVFLFAFVVPILVITVCYGLMLL). At 167–189 (RLRSVRLLSGSKEKDRSLRRITR) the chain is on the cytoplasmic side. The helical transmembrane segment at 190-212 (MVLVVVGAFVVCWAPIHIFVIVW) threads the bilayer. Over 213–227 (TLVDIDRRDPLVVAA) the chain is Extracellular.

Belongs to the G-protein coupled receptor 1 family. In terms of assembly, may form homooligomers. Forms a heterodimer with OPRM1. Interacts with GPRASP1. Interacts with RTP4; the interaction promotes cell surface localization of the OPRD1-OPRM1 heterodimer. Ubiquitinated. A basal ubiquitination seems not to be related to degradation. Ubiquitination is increased upon formation of OPRM1:OPRD1 oligomers leading to proteasomal degradation; the ubiquitination is diminished by RTP4. Detected in myenteric plexus and smooth muscle (at protein level). Detected in brain and intestine.

The protein localises to the cell membrane. Its function is as follows. G-protein coupled receptor that functions as a receptor for endogenous enkephalins and for a subset of other opioids. Ligand binding causes a conformation change that triggers signaling via guanine nucleotide-binding proteins (G proteins) and modulates the activity of down-stream effectors, such as adenylate cyclase. Signaling leads to the inhibition of adenylate cyclase activity. Inhibits neurotransmitter release by reducing calcium ion currents and increasing potassium ion conductance. Plays a role in the perception of pain and in opiate-mediated analgesia. Plays a role in developing analgesic tolerance to morphine. In Sus scrofa (Pig), this protein is Delta-type opioid receptor (OPRD1).